The sequence spans 62 residues: Photosystem II reaction center protein Z (62 aa).

The next 2 helical transmembrane spans lie at 8-28 (AVFALIATSLILLISVPVVFA) and 41-61 (FSGTSLWIGLVFLVGILNSLI).

The protein belongs to the PsbZ family. As to quaternary structure, PSII is composed of 1 copy each of membrane proteins PsbA, PsbB, PsbC, PsbD, PsbE, PsbF, PsbH, PsbI, PsbJ, PsbK, PsbL, PsbM, PsbT, PsbY, PsbZ, Psb30/Ycf12, at least 3 peripheral proteins of the oxygen-evolving complex and a large number of cofactors. It forms dimeric complexes.

Its subcellular location is the plastid. The protein localises to the chloroplast thylakoid membrane. Functionally, may control the interaction of photosystem II (PSII) cores with the light-harvesting antenna, regulates electron flow through the 2 photosystem reaction centers. PSII is a light-driven water plastoquinone oxidoreductase, using light energy to abstract electrons from H(2)O, generating a proton gradient subsequently used for ATP formation. The sequence is that of Photosystem II reaction center protein Z from Nicotiana sylvestris (Wood tobacco).